Here is a 584-residue protein sequence, read N- to C-terminus: 65 kDa membrane protein (584 aa).

An N-terminal signal peptide occupies residues 1-30 (MKFKSLITTTLALGVLASTGANFNNNEASA). MAP repeat units follow at residues 45–154 (GYSK…EDKK), 156–265 (DKAN…ENKA), 266–374 (KRNY…KADR), 375–474 (YVPY…TGTK), and 475–584 (AKAD…KKNK).

Its subcellular location is the cell membrane. Functionally, binds various plasma and ECM-proteins. This Staphylococcus aureus (strain Newman) protein is 65 kDa membrane protein.